The following is a 240-amino-acid chain: UDP-2,3-diacylglucosamine hydrolase (240 aa).

5 residues coordinate Mn(2+): Asp-8, His-10, Asp-41, Asn-79, and His-114. A substrate-binding site is contributed by 79-80 (NR). The substrate site is built by Asp-122, Ser-160, Asn-164, Lys-167, and His-195. Residues His-195 and His-197 each coordinate Mn(2+).

Belongs to the LpxH family. It depends on Mn(2+) as a cofactor.

The protein localises to the cell inner membrane. The catalysed reaction is UDP-2-N,3-O-bis[(3R)-3-hydroxytetradecanoyl]-alpha-D-glucosamine + H2O = 2-N,3-O-bis[(3R)-3-hydroxytetradecanoyl]-alpha-D-glucosaminyl 1-phosphate + UMP + 2 H(+). It functions in the pathway glycolipid biosynthesis; lipid IV(A) biosynthesis; lipid IV(A) from (3R)-3-hydroxytetradecanoyl-[acyl-carrier-protein] and UDP-N-acetyl-alpha-D-glucosamine: step 4/6. Its function is as follows. Hydrolyzes the pyrophosphate bond of UDP-2,3-diacylglucosamine to yield 2,3-diacylglucosamine 1-phosphate (lipid X) and UMP by catalyzing the attack of water at the alpha-P atom. Involved in the biosynthesis of lipid A, a phosphorylated glycolipid that anchors the lipopolysaccharide to the outer membrane of the cell. This Yersinia pseudotuberculosis serotype O:1b (strain IP 31758) protein is UDP-2,3-diacylglucosamine hydrolase.